A 194-amino-acid chain; its full sequence is NADH-quinone oxidoreductase subunit B (194 aa).

Over residues 1-11 (MGVIATPPPSV) the composition is skewed to pro residues. The disordered stretch occupies residues 1–24 (MGVIATPPPSVQGPSSQVPSSAPI). Residues 12–21 (QGPSSQVPSS) show a composition bias toward low complexity. Residues Cys72, Cys73, Cys137, and Cys167 each coordinate [4Fe-4S] cluster.

This sequence belongs to the complex I 20 kDa subunit family. As to quaternary structure, NDH-1 is composed of 14 different subunits. Subunits NuoB, C, D, E, F, and G constitute the peripheral sector of the complex. The cofactor is [4Fe-4S] cluster.

The protein localises to the cell inner membrane. It carries out the reaction a quinone + NADH + 5 H(+)(in) = a quinol + NAD(+) + 4 H(+)(out). Its function is as follows. NDH-1 shuttles electrons from NADH, via FMN and iron-sulfur (Fe-S) centers, to quinones in the respiratory chain. The immediate electron acceptor for the enzyme in this species is believed to be ubiquinone. Couples the redox reaction to proton translocation (for every two electrons transferred, four hydrogen ions are translocated across the cytoplasmic membrane), and thus conserves the redox energy in a proton gradient. In Rhodospirillum centenum (strain ATCC 51521 / SW), this protein is NADH-quinone oxidoreductase subunit B.